A 237-amino-acid polypeptide reads, in one-letter code: Ribosomal RNA small subunit methyltransferase G (237 aa).

Residues Gly-78, Phe-83, Ala-129 to Glu-130, and Arg-148 contribute to the S-adenosyl-L-methionine site. Residues Lys-218 to Leu-237 form a disordered region.

The protein belongs to the methyltransferase superfamily. RNA methyltransferase RsmG family.

The protein resides in the cytoplasm. In terms of biological role, specifically methylates the N7 position of a guanine in 16S rRNA. This Streptococcus suis (strain 98HAH33) protein is Ribosomal RNA small subunit methyltransferase G.